The chain runs to 55 residues: Ferredoxin (55 aa).

2 4Fe-4S ferredoxin-type domains span residues 2–27 and 28–55; these read HIITDECISCGACAAECPVEAIHEGT and GKYEVDADTCIDCGACEAVCPTGAVKAE. C8, C11, C14, C18, C37, C40, C43, and C47 together coordinate [4Fe-4S] cluster.

[4Fe-4S] cluster is required as a cofactor.

Its function is as follows. Ferredoxins are iron-sulfur proteins that transfer electrons in a wide variety of metabolic reactions. This Thermoanaerobacterium thermosaccharolyticum (Clostridium thermosaccharolyticum) protein is Ferredoxin.